A 287-amino-acid chain; its full sequence is 4-hydroxybenzoate octaprenyltransferase (287 aa).

7 helical membrane passes run 30–50 (ALWI…FALG), 92–112 (IAIA…LNGL), 133–153 (FFAI…PMAF), 158–178 (DTVP…SVAY), 207–227 (VLAI…LGAA), 232–252 (WPYW…YTLI), and 266–286 (HNNW…ALAV).

This sequence belongs to the UbiA prenyltransferase family. Mg(2+) is required as a cofactor.

The protein localises to the cell inner membrane. The catalysed reaction is all-trans-octaprenyl diphosphate + 4-hydroxybenzoate = 4-hydroxy-3-(all-trans-octaprenyl)benzoate + diphosphate. It functions in the pathway cofactor biosynthesis; ubiquinone biosynthesis. Catalyzes the prenylation of para-hydroxybenzoate (PHB) with an all-trans polyprenyl group. Mediates the second step in the final reaction sequence of ubiquinone-8 (UQ-8) biosynthesis, which is the condensation of the polyisoprenoid side chain with PHB, generating the first membrane-bound Q intermediate 3-octaprenyl-4-hydroxybenzoate. This is 4-hydroxybenzoate octaprenyltransferase from Burkholderia mallei (strain NCTC 10247).